The chain runs to 261 residues: tRNA pseudouridine synthase A (261 aa).

Catalysis depends on Asp51, which acts as the Nucleophile. Tyr109 contributes to the substrate binding site.

This sequence belongs to the tRNA pseudouridine synthase TruA family. In terms of assembly, homodimer.

It carries out the reaction uridine(38/39/40) in tRNA = pseudouridine(38/39/40) in tRNA. Functionally, formation of pseudouridine at positions 38, 39 and 40 in the anticodon stem and loop of transfer RNAs. In Shewanella sp. (strain MR-7), this protein is tRNA pseudouridine synthase A.